Here is a 413-residue protein sequence, read N- to C-terminus: Low-salt glycan biosynthesis hexosyltransferase Agl6 (413 aa).

Residues 1-27 form a disordered region; that stretch reads MSTRSQSESPVDAPQQGATNGQSASDI. Over residues 16-25 the composition is skewed to polar residues; the sequence is QGATNGQSAS. 4 consecutive transmembrane segments (helical) span residues 270–290, 304–324, 355–375, and 389–409; these read LFSA…VLAW, TGIG…FGAF, IGSV…FTWV, and VVAT…FLLG.

This sequence belongs to the glycosyltransferase 2 family.

It localises to the membrane. It functions in the pathway protein modification; protein glycosylation. It participates in cell surface structure biogenesis; S-layer biogenesis. Its function is as follows. Hexosyltransferase involved in N-glycan biosynthetic pathway that takes place under low-salt conditions (1.75 M instead of 3.4 M). Participates in the formation of the tetrasaccharide present at 'Asn-532' of S-layer glycoprotein Csg, consisting of a sulfated hexose, 2 hexoses and rhamnose. Together with Agl5, mediates the addition of sugars 1 and 2 to dolichol phosphate in the tetrasaccharide. This is Low-salt glycan biosynthesis hexosyltransferase Agl6 (agl6) from Haloferax volcanii (strain ATCC 29605 / DSM 3757 / JCM 8879 / NBRC 14742 / NCIMB 2012 / VKM B-1768 / DS2) (Halobacterium volcanii).